A 636-amino-acid polypeptide reads, in one-letter code: MHSLSLRRLLTSVLSLCSCSSALPNQRRSNVTSHVETYYSVDGATHAEKSKALKADGYRIVSLSSYGSPDSANYAAIWVQEEGPSFEIIHDADEATYNSWLQTWKSRGYVSTQVSATGPAENAVFAGVMENINVANWFQSCELENPWAFSNTTGNVDVVVKGFRMFGTPEERRYCILGHENVGNEQTTIQYSTPSFTVNFASTFEAETTKRFWRPSRLFLSEDHIITPSFADTSVGKWSHAVDLTKAELKEKIETERAKGLYPIDIQGGGSGSSERFTVVFAERTSPKPRQWNVRGEITGFEDNKAAEEEVDSIMRRFMEKNGVRQAQFAVALEGKTIAERSYTWAEDDRAIVEPDDIFLLASVSKMFLHASIDWLVSHDMLNFSTPVYDLLGYKPADSRANDINVQHLLDHSAGYDRSMSGDPSFMFREIAQSLPTKGAKAATLRDVIEYVVAKPLDFTPGDYSAYSNYCPMLLSYVVTNITGVPYLDFLEKNILDGLNVRLYETAASKHTEDRIVQESKNTGQDPVHPQSAKLVPGPHGGDGAVKEECAGTFAMAASASSLAKFIGSHAVWGTGGRVSSNRDGSLSGARAYVESRGTIDWALTLNTREYISETEFDELRWYSLPDFLSAFPIAG.

A signal peptide spans 1–22 (MHSLSLRRLLTSVLSLCSCSSA). N-linked (GlcNAc...) asparagine glycosylation is found at Asn-30 and Asn-151. Residues Cys-141 and Cys-175 are joined by a disulfide bond. Ser-363 is a catalytic residue. N-linked (GlcNAc...) asparagine glycosylation is found at Asn-383 and Asn-481. The interval 512–540 (TEDRIVQESKNTGQDPVHPQSAKLVPGPH) is disordered.

Belongs to the peptidase S12 family.

It localises to the secreted. The catalysed reaction is a glycyl-glycyl-[protein] + H2O = N-terminal glycyl-[protein] + [protein]-C-terminal glycine. Its function is as follows. Serine-type endopeptidase that cleaves Gly-Gly bonds in the polyglycine linker of host plant class IV chitinases to disrupt their chitin-binding, and thereby plays a role in lowering the defense responses of the host to the fungus. Degrades Z.mays Endochitinase A (CHIA) in vitro, although corn is not its host species. The sequence is that of Polyglycine hydrolase from Fusarium vanettenii (strain ATCC MYA-4622 / CBS 123669 / FGSC 9596 / NRRL 45880 / 77-13-4) (Fusarium solani subsp. pisi).